The primary structure comprises 1067 residues: Tricorn protease homolog 1 (1067 aa).

Positions Thr518 to Ile551 are disordered. Residues Arg530–Thr540 are compositionally biased toward basic and acidic residues. The active-site Charge relay system is the His740. The segment at Arg754–Glu851 is PDZ-like. Residue Gly914 participates in substrate binding. Ser961 (nucleophile) is an active-site residue. The active-site Charge relay system is the Glu1019.

Belongs to the peptidase S41B family. Forms a homohexameric complex; it is not known if it assembles into higher-order structures.

It is found in the cytoplasm. Its activity is regulated as follows. Stimulated by MgCl2. In terms of biological role, degrades oligopeptides in a sequential manner. The protein is Tricorn protease homolog 1 (tri1) of Streptomyces coelicolor (strain ATCC BAA-471 / A3(2) / M145).